A 63-amino-acid chain; its full sequence is MAEVSLGMLIDIVDEEWMRDTLPDDDLPLPPVLAVKTDDTEETNQETQQADAETWRDLALDTQ.

Residues 36 to 63 (KTDDTEETNQETQQADAETWRDLALDTQ) form a disordered region. Residues 53–63 (ETWRDLALDTQ) are compositionally biased toward basic and acidic residues.

This sequence belongs to the APC13 family. In terms of assembly, component of the anaphase promoting complex/cyclosome (APC/C) complex. In terms of tissue distribution, expressed constitutively in roots, leaves, stems, buds, flowers, and seeds.

The protein resides in the nucleus. The protein operates within protein modification; protein ubiquitination. Its function is as follows. Component of the anaphase promoting complex/cyclosome (APC/C), a cell cycle-regulated E3 ubiquitin ligase that controls progression through mitosis and the G1 phase of the cell cycle. The APC/C complex acts by mediating ubiquitination and subsequent degradation of target proteins. Regulates global growth and development, including phyllotaxis and apical dominance. Required for pollen maturation. Promotes (pri) miRNA transcription of each MIR159 genes. This is Anaphase-promoting complex subunit 13 from Arabidopsis thaliana (Mouse-ear cress).